The primary structure comprises 138 residues: Transcription antitermination protein NusB (138 aa).

This sequence belongs to the NusB family.

Its function is as follows. Involved in transcription antitermination. Required for transcription of ribosomal RNA (rRNA) genes. Binds specifically to the boxA antiterminator sequence of the ribosomal RNA (rrn) operons. In Helicobacter pylori (strain G27), this protein is Transcription antitermination protein NusB.